A 437-amino-acid polypeptide reads, in one-letter code: Ribosomal protein uS12 methylthiotransferase RimO (437 aa).

An MTTase N-terminal domain is found at 4–114 (PRVSFVSLGC…VMNAVHEVAP (111 aa)). [4Fe-4S] cluster contacts are provided by Cys-13, Cys-49, Cys-78, Cys-145, Cys-149, and Cys-152. Residues 131–369 (LTPRHYAYLK…MAKQQQISTN (239 aa)) enclose the Radical SAM core domain. Residues 372–437 (KKKVGKRLPV…DAYDLHGTAV (66 aa)) form the TRAM domain.

It belongs to the methylthiotransferase family. RimO subfamily. The cofactor is [4Fe-4S] cluster.

It localises to the cytoplasm. It carries out the reaction L-aspartate(89)-[ribosomal protein uS12]-hydrogen + (sulfur carrier)-SH + AH2 + 2 S-adenosyl-L-methionine = 3-methylsulfanyl-L-aspartate(89)-[ribosomal protein uS12]-hydrogen + (sulfur carrier)-H + 5'-deoxyadenosine + L-methionine + A + S-adenosyl-L-homocysteine + 2 H(+). In terms of biological role, catalyzes the methylthiolation of an aspartic acid residue of ribosomal protein uS12. The polypeptide is Ribosomal protein uS12 methylthiotransferase RimO (Brucella abortus (strain S19)).